Consider the following 128-residue polypeptide: Fluoride-specific ion channel FluC (128 aa).

4 helical membrane-spanning segments follow: residues 4–24 (LLLVAAGGALGSVARYLVGVQ), 37–57 (TFIVNLTGGLLMGLLAAWLAL), 72–92 (VGVMGGFTTFSAFSLETALMI), and 101–121 (FTYTTASVILSVAAIFAGLLI). Na(+) contacts are provided by G76 and T79.

Belongs to the fluoride channel Fluc/FEX (TC 1.A.43) family.

The protein localises to the cell inner membrane. The catalysed reaction is fluoride(in) = fluoride(out). Its activity is regulated as follows. Na(+) is not transported, but it plays an essential structural role and its presence is essential for fluoride channel function. Fluoride-specific ion channel. Important for reducing fluoride concentration in the cell, thus reducing its toxicity. The sequence is that of Fluoride-specific ion channel FluC from Caulobacter sp. (strain K31).